The following is an 851-amino-acid chain: Venom phosphodiesterase (851 aa).

The signal sequence occupies residues 1 to 23 (MIQQKVLFISLVAVALGLGLGLG). SMB domains are found at residues 30–73 (PQVS…VLPT) and 74–118 (QSWS…GETS). 16 disulfide bridges follow: cysteine 34–cysteine 38, cysteine 34–cysteine 51, cysteine 38–cysteine 69, cysteine 49–cysteine 51, cysteine 49–cysteine 62, cysteine 55–cysteine 61, cysteine 62–cysteine 69, cysteine 78–cysteine 83, cysteine 78–cysteine 95, cysteine 83–cysteine 113, cysteine 93–cysteine 95, cysteine 93–cysteine 106, cysteine 99–cysteine 105, cysteine 106–cysteine 113, cysteine 124–cysteine 170, and cysteine 132–cysteine 344. Asparagine 39 is a glycosylation site (N-linked (GlcNAc...) asparagine). Positions 58–60 (RQA) match the Cell attachment site motif. 2 residues coordinate a divalent metal cation: aspartate 147 and threonine 185. The active-site AMP-threonine intermediate is the threonine 185. 3 N-linked (GlcNAc...) asparagine glycosylation sites follow: asparagine 216, asparagine 259, and asparagine 270. Lysine 271 provides a ligand contact to AMP. A divalent metal cation-binding residues include aspartate 305, histidine 309, aspartate 352, and histidine 353. Histidine 309 contacts AMP. Disulfide bonds link cysteine 360–cysteine 457, cysteine 408–cysteine 793, cysteine 541–cysteine 599, cysteine 554–cysteine 654, cysteine 556–cysteine 639, and cysteine 762–cysteine 772. Asparagine 405 carries N-linked (GlcNAc...) asparagine glycosylation. Histidine 462 is a binding site for a divalent metal cation. N-linked (GlcNAc...) asparagine glycans are attached at residues asparagine 512, asparagine 594, and asparagine 745.

The protein belongs to the nucleotide pyrophosphatase/phosphodiesterase family. As to quaternary structure, monomer cleaved in two subunits; disulfide-linked. Is synthesized as a single-chain protein and is subsequently cleaved to form a two-subunit protein held together with disulfide bonds. Requires a divalent metal cation as cofactor. As to expression, expressed by venom gland.

Its subcellular location is the secreted. The catalysed reaction is ADP + H2O = AMP + phosphate + H(+). In terms of biological role, hydrolyzes ADP with high activity. Shows weak or no activity on 5'-AMP, 5'-GMP, 3'-AMP, ATP, cAMP, and cGMP. Is devoid of monophosphatase and proteinase activities. Dose-dependently inhibits platelet aggregation induced by ADP (IC(50)=0.99 uM) and collagen (IC(50)=1.4 uM). In Macrovipera lebetinus (Levantine viper), this protein is Venom phosphodiesterase.